The following is a 99-amino-acid chain: Large ribosomal subunit protein eL21 (99 aa).

The span at 1–14 (MPNSNGPLSNSGGK) shows a compositional bias: polar residues. The interval 1–38 (MPNSNGPLSNSGGKLQNDPRDRGTSPPQRAIADYDDGE) is disordered.

It belongs to the eukaryotic ribosomal protein eL21 family.

In Halobacterium salinarum (strain ATCC 29341 / DSM 671 / R1), this protein is Large ribosomal subunit protein eL21.